Consider the following 117-residue polypeptide: Probable prefoldin subunit 1 (117 aa).

It belongs to the prefoldin subunit beta family. Heterohexamer of two PFD-alpha type and four PFD-beta type subunits. In terms of tissue distribution, expressed in the distal cell tip of developing embryos.

The protein resides in the cytoplasm. In terms of biological role, binds specifically to cytosolic chaperonin (c-CPN) and transfers target proteins to it. Binds to nascent polypeptide chain and promotes folding in an environment in which there are many competing pathways for nonnative proteins. Has a role in gonadogenesis. The polypeptide is Probable prefoldin subunit 1 (pfd-1) (Caenorhabditis elegans).